Here is a 158-residue protein sequence, read N- to C-terminus: Ribosome maturation factor RimP (158 aa).

Belongs to the RimP family.

Its subcellular location is the cytoplasm. Functionally, required for maturation of 30S ribosomal subunits. This Lactiplantibacillus plantarum (strain ATCC BAA-793 / NCIMB 8826 / WCFS1) (Lactobacillus plantarum) protein is Ribosome maturation factor RimP.